A 337-amino-acid chain; its full sequence is Glucan endo-1,3-beta-glucosidase, basic isoform 1 (337 aa).

Glutamate 94 (proton donor) is an active-site residue. Glutamate 239 acts as the Nucleophile in catalysis. A propeptide spans 315 to 337 (VSERVWDISAETNSTASSLISEM) (removed in mature form). The N-linked (GlcNAc...) asparagine glycan is linked to asparagine 327.

It belongs to the glycosyl hydrolase 17 family.

It is found in the vacuole. The catalysed reaction is Hydrolysis of (1-&gt;3)-beta-D-glucosidic linkages in (1-&gt;3)-beta-D-glucans.. Is thought to be an important plant defense-related product against fungal pathogens. The polypeptide is Glucan endo-1,3-beta-glucosidase, basic isoform 1 (GLUB1) (Solanum tuberosum (Potato)).